A 398-amino-acid chain; its full sequence is Lysophosphatidylserine lipase ABHD12 (398 aa).

Topologically, residues 1 to 74 (MRKRTEPVAL…RKGLWLRLRK (74 aa)) are cytoplasmic. A helical transmembrane segment spans residues 75 to 95 (ILFCVLGLYIAIPFLIKLCPG). At 96 to 398 (IQAKLIFLNF…LGKSEPEHQH (303 aa)) the chain is on the extracellular side. N123 carries N-linked (GlcNAc...) asparagine glycosylation. S246 functions as the Nucleophile in the catalytic mechanism. Catalysis depends on charge relay system residues D333 and H372.

It belongs to the serine esterase family.

It localises to the endoplasmic reticulum membrane. The catalysed reaction is 1-(9Z-octadecenoyl)-sn-glycero-3-phospho-L-serine + H2O = sn-glycero-3-phospho-L-serine + (9Z)-octadecenoate + H(+). It catalyses the reaction 1-(9Z-octadecenoyl)-sn-glycero-3-phospho-(1'-sn-glycerol) + H2O = sn-glycero-3-phospho-(1'-sn-glycerol) + (9Z)-octadecenoate + H(+). The enzyme catalyses 1-(9Z-octadecenoyl)-sn-glycero-3-phospho-(1D-myo-inositol) + H2O = sn-glycero-3-phospho-1D-myo-inositol + (9Z)-octadecenoate + H(+). It carries out the reaction 1-(9Z-octadecenoyl)-sn-glycero-3-phosphoethanolamine + H2O = sn-glycero-3-phosphoethanolamine + (9Z)-octadecenoate + H(+). The catalysed reaction is 1-(9Z-octadecenoyl)-sn-glycero-3-phosphocholine + H2O = 1-(9Z-octadecenoyl)-sn-glycerol + phosphocholine + H(+). It catalyses the reaction 2-(9Z-octadecenoyl)-glycerol + H2O = glycerol + (9Z)-octadecenoate + H(+). The enzyme catalyses 1-hexadecanoyl-sn-glycero-3-phospho-L-serine + H2O = sn-glycero-3-phospho-L-serine + hexadecanoate + H(+). It carries out the reaction 2-(5Z,8Z,11Z,14Z-eicosatetraenoyl)-glycerol + H2O = glycerol + (5Z,8Z,11Z,14Z)-eicosatetraenoate + H(+). The catalysed reaction is Hydrolyzes glycerol monoesters of long-chain fatty acids.. It catalyses the reaction 1-decanoylglycerol + H2O = decanoate + glycerol + H(+). The enzyme catalyses 1-dodecanoylglycerol + H2O = dodecanoate + glycerol + H(+). It carries out the reaction 1-tetradecanoylglycerol + H2O = tetradecanoate + glycerol + H(+). The catalysed reaction is 2-hexadecanoylglycerol + H2O = glycerol + hexadecanoate + H(+). It catalyses the reaction 1-(9Z-octadecenoyl)-glycerol + H2O = glycerol + (9Z)-octadecenoate + H(+). The enzyme catalyses 2-(9Z,12Z-octadecadienoyl)-glycerol + H2O = (9Z,12Z)-octadecadienoate + glycerol + H(+). It carries out the reaction 1-(5Z,8Z,11Z,14Z-eicosatetraenoyl)-glycerol + H2O = glycerol + (5Z,8Z,11Z,14Z)-eicosatetraenoate + H(+). The catalysed reaction is 1-(9Z,12Z-octadecadienoyl)-glycerol + H2O = (9Z,12Z)-octadecadienoate + glycerol + H(+). It catalyses the reaction 1-hexadecanoylglycerol + H2O = glycerol + hexadecanoate + H(+). The enzyme catalyses 1-octadecanoylglycerol + H2O = octadecanoate + glycerol + H(+). It carries out the reaction 1-octadecanoyl-2-(9,10-epoxyoctadecanoyl)-sn-glycero-3-phospho-L-serine + H2O = 9,10-epoxyoctadecanoate + 1-octadecanoyl-sn-glycero-3-phosphoserine + H(+). The catalysed reaction is 1-octadecanoyl-2-(10-hydroxyoctadecanoyl)-sn-glycero-3-phospho-L-serine + H2O = 1-octadecanoyl-sn-glycero-3-phosphoserine + 10-hydroxyoctadecanoate + H(+). It catalyses the reaction 1-hexadecanoyl-2-(10-hydroxyoctadecanoyl)-sn-glycero-3-phospho-L-serine + H2O = 10-hydroxyoctadecanoate + 1-hexadecanoyl-sn-glycero-3-phospho-L-serine + H(+). Lysophosphatidylserine (LPS) lipase that mediates the hydrolysis of lysophosphatidylserine, a class of signaling lipids that regulates immunological and neurological processes. Represents a major lysophosphatidylserine lipase in the brain, thereby playing a key role in the central nervous system. Also able to hydrolyze oxidized phosphatidylserine; oxidized phosphatidylserine is produced in response to severe inflammatory stress and constitutes a proapoptotic 'eat me' signal. Also has monoacylglycerol (MAG) lipase activity: hydrolyzes 2-arachidonoylglycerol (2-AG), thereby acting as a regulator of endocannabinoid signaling pathways. Has a strong preference for very-long-chain lipid substrates; substrate specificity is likely due to improved catalysis and not improved substrate binding. The protein is Lysophosphatidylserine lipase ABHD12 of Macaca fascicularis (Crab-eating macaque).